Consider the following 109-residue polypeptide: Large ribosomal subunit protein uL24 (109 aa).

The protein belongs to the universal ribosomal protein uL24 family. In terms of assembly, part of the 50S ribosomal subunit.

In terms of biological role, one of two assembly initiator proteins, it binds directly to the 5'-end of the 23S rRNA, where it nucleates assembly of the 50S subunit. One of the proteins that surrounds the polypeptide exit tunnel on the outside of the subunit. The sequence is that of Large ribosomal subunit protein uL24 from Rickettsia bellii (strain RML369-C).